The following is a 446-amino-acid chain: Maltoporin (446 aa).

A signal peptide spans 1-25 (MMITLRKLPLAVAVAAGVMSAQAMA).

The protein belongs to the porin LamB (TC 1.B.3) family. In terms of assembly, homotrimer formed of three 18-stranded antiparallel beta-barrels, containing three independent channels.

It localises to the cell outer membrane. The catalysed reaction is beta-maltose(in) = beta-maltose(out). In terms of biological role, involved in the transport of maltose and maltodextrins. The polypeptide is Maltoporin (Escherichia coli O157:H7 (strain EC4115 / EHEC)).